The sequence spans 146 residues: Hemoglobin subunit beta-0 (146 aa).

The 145-residue stretch at 2 to 146 folds into the Globin domain; sequence EWTDFERATI…VVSSLGRQYH (145 aa). Histidine 63 and histidine 92 together coordinate heme b.

This sequence belongs to the globin family. As to quaternary structure, heterotetramer of two alpha chains and two beta chains. As to expression, red blood cells.

Involved in oxygen transport from gills to the various peripheral tissues. This is Hemoglobin subunit beta-0 (hbb0) from Pagothenia borchgrevinki (Bald rockcod).